A 120-amino-acid chain; its full sequence is UPF0231 protein CKO_03249 (120 aa).

The protein belongs to the UPF0231 family.

The protein is UPF0231 protein CKO_03249 of Citrobacter koseri (strain ATCC BAA-895 / CDC 4225-83 / SGSC4696).